The sequence spans 785 residues: Hyperosmolality-gated Ca2+ permeable channel 1.7 (785 aa).

A helical membrane pass occupies residues 7 to 27 (IGLSAAINLLSAFAFLFAFAM). Ser-54 bears the Phosphoserine mark. A run of 9 helical transmembrane segments spans residues 101–121 (IYLLGLKMFVPITLLAFGVLV), 156–176 (FWAHITMTYVITFWTCYILYM), 373–393 (LLTTVALFFLIFCFMIPIAFV), 425–445 (FLPGIALKIFLIILPTILMTM), 465–485 (YFWFIIVNVFLGSIITGTAFQ), 510–530 (ATFFITYIMVDGWAGIAAEIL), 582–602 (AVAPILLPFIIVFFAFAYVVF), 628–648 (LIICLIISQLLMMGLLSTKKF), and 651–671 (VTALLLPQPILTFWFYRYCAG). The tract at residues 725–761 (VDEEESNPLVRTKRTSQGTTRYNSEASSSATTTPVAN) is disordered. Residues 739–761 (TSQGTTRYNSEASSSATTTPVAN) are compositionally biased toward polar residues.

This sequence belongs to the CSC1 (TC 1.A.17) family. In terms of processing, phosphorylated and activated by BIK1.

The protein resides in the membrane. The enzyme catalyses Ca(2+)(in) = Ca(2+)(out). Calcium-permeable channel involved in plant stomatal immunity. In Arabidopsis thaliana (Mouse-ear cress), this protein is Hyperosmolality-gated Ca2+ permeable channel 1.7.